A 701-amino-acid polypeptide reads, in one-letter code: Glycine--tRNA ligase beta subunit (701 aa).

It belongs to the class-II aminoacyl-tRNA synthetase family. As to quaternary structure, tetramer of two alpha and two beta subunits.

The protein localises to the cytoplasm. It catalyses the reaction tRNA(Gly) + glycine + ATP = glycyl-tRNA(Gly) + AMP + diphosphate. The protein is Glycine--tRNA ligase beta subunit of Anaeromyxobacter dehalogenans (strain 2CP-1 / ATCC BAA-258).